The sequence spans 128 residues: Large ribosomal subunit protein bL17 (128 aa).

The protein belongs to the bacterial ribosomal protein bL17 family. In terms of assembly, part of the 50S ribosomal subunit. Contacts protein L32.

The chain is Large ribosomal subunit protein bL17 from Streptococcus uberis (strain ATCC BAA-854 / 0140J).